Consider the following 386-residue polypeptide: Lipoyl synthase, mitochondrial (386 aa).

Residues cysteine 110, cysteine 115, cysteine 121, cysteine 141, cysteine 145, cysteine 148, and serine 356 each coordinate [4Fe-4S] cluster. The 222-residue stretch at 124-345 (GNDKSKATAT…KEQALEMGFL (222 aa)) folds into the Radical SAM core domain.

Belongs to the radical SAM superfamily. Lipoyl synthase family. It depends on [4Fe-4S] cluster as a cofactor.

It is found in the mitochondrion. It catalyses the reaction [[Fe-S] cluster scaffold protein carrying a second [4Fe-4S](2+) cluster] + N(6)-octanoyl-L-lysyl-[protein] + 2 oxidized [2Fe-2S]-[ferredoxin] + 2 S-adenosyl-L-methionine + 4 H(+) = [[Fe-S] cluster scaffold protein] + N(6)-[(R)-dihydrolipoyl]-L-lysyl-[protein] + 4 Fe(3+) + 2 hydrogen sulfide + 2 5'-deoxyadenosine + 2 L-methionine + 2 reduced [2Fe-2S]-[ferredoxin]. It functions in the pathway protein modification; protein lipoylation via endogenous pathway; protein N(6)-(lipoyl)lysine from octanoyl-[acyl-carrier-protein]: step 2/2. In terms of biological role, catalyzes the radical-mediated insertion of two sulfur atoms into the C-6 and C-8 positions of the octanoyl moiety bound to the lipoyl domains of lipoate-dependent enzymes, thereby converting the octanoylated domains into lipoylated derivatives. This chain is Lipoyl synthase, mitochondrial, found in Zygosaccharomyces rouxii (strain ATCC 2623 / CBS 732 / NBRC 1130 / NCYC 568 / NRRL Y-229).